Consider the following 494-residue polypeptide: V-type proton ATPase subunit B (494 aa).

Position 384 (Arg-384) interacts with ATP.

It belongs to the ATPase alpha/beta chains family. V-ATPase is a heteromultimeric enzyme made up of two complexes: the ATP-hydrolytic V1 complex and the proton translocation V0 complex. The V1 complex consists of three catalytic AB heterodimers that form a heterohexamer, three peripheral stalks each consisting of EG heterodimers, one central rotor including subunits D and F, and the regulatory subunits C and H. The proton translocation complex V0 consists of the proton transport subunit a, a ring of proteolipid subunits c9c'', rotary subunit d, subunits e and f, and the accessory subunits VhaAC45 and ATP6AP2.

Non-catalytic subunit of the V1 complex of vacuolar(H+)-ATPase (V-ATPase), a multisubunit enzyme composed of a peripheral complex (V1) that hydrolyzes ATP and a membrane integral complex (V0) that translocates protons. V-ATPase is responsible for acidifying and maintaining the pH of intracellular compartments and in some cell types, is targeted to the plasma membrane, where it is responsible for acidifying the extracellular environment. Essential for the proper assembly and activity of V-ATPase. The polypeptide is V-type proton ATPase subunit B (VHA55) (Heliothis virescens (Tobacco budworm moth)).